A 418-amino-acid polypeptide reads, in one-letter code: Beta-arrestin-1 (418 aa).

The interaction with SRC stretch occupies residues 1–163; it reads MGDKGTRVFK…LEEKIHKRNS (163 aa). The tract at residues 45–86 is interaction with CHRM2; that stretch reads PEYLKERRVYVTLTCAFRYGREDLDVLGLTFRKDLFVANVQS. A Phosphotyrosine modification is found at Y47. 4 residues coordinate 1D-myo-inositol hexakisphosphate: K250, M255, K324, and K326. The interval 318–418 is interaction with TRAF6; the sequence is IVSYKVKVKL…GTGSPHLNNR (101 aa). 2 disordered regions span residues 353–375 and 397–418; these read HPKP…VDTN and KGMK…LNNR. A compositionally biased stretch (basic and acidic residues) spans 355–366; the sequence is KPKEEPPHREVP. A Phosphoserine modification is found at S412.

This sequence belongs to the arrestin family. Monomer. Homodimer. Homooligomer; the self-association is mediated by InsP6-binding. Heterooligomer with ARRB2; the association is mediated by InsP6-binding. Interacts with ADRB2 (phosphorylated). Interacts with CHRM2 (phosphorylated). Interacts with LHCGR. Interacts with CYTH2 and CASR. Interacts with AP2B1 (dephosphorylated); phosphorylation of AP2B1 disrupts the interaction. Interacts (dephosphorylated at Ser-412) with CLTC. Interacts with CCR2 and GRK2. Interacts with CRR5. Interacts with PTAFR (phosphorylated on serine residues). Interacts with CLTC and MAP2K3. Interacts with CREB1. Interacts with TRAF6. Interacts with IGF1R and MDM2. Interacts with C5AR1. Interacts with PDE4D. Interacts with SRC (via the SH3 domain and the protein kinase domain); the interaction is independent of the phosphorylation state of SRC C-terminus. Interacts with TACR1. Interacts with RAF1. Interacts with DVL1; the interaction is enhanced by phosphorylation of DVL1. Interacts with DVL2; the interaction is enhanced by phosphorylation of DVL2. Interacts with IGF1R. Interacts with CHUK, IKBKB and MAP3K14. Associates with MAP kinase p38. Part of a MAPK signaling complex consisting of TACR1, ARRB1, SRC, MAPK1 (activated) and MAPK3 (activated). Part of a MAPK signaling complex consisting of F2RL1, ARRB1, RAF1, MAPK1 (activated) and MAPK3 (activated). Interacts with GPR143. Interacts with MAP2K4/MKK4. Interacts with HCK and CXCR1 (phosphorylated). Interacts with ACKR3 and ACKR4. Interacts with ARRDC1; the interaction is direct. Interacts with GPR61, GPR62 and GPR135. Constitutively phosphorylated at in the cytoplasm. At the plasma membrane, is rapidly dephosphorylated, a process that is required for clathrin binding and ADRB2 endocytosis but not for ADRB2 binding and desensitization. Once internalized, is rephosphorylated. Post-translationally, the ubiquitination status appears to regulate the formation and trafficking of beta-arrestin-GPCR complexes and signaling. Ubiquitination appears to occur GPCR-specific. Ubiquitinated by MDM2; the ubiquitination is required for rapid internalization of ADRB2. Deubiquitinated by USP33; the deubiquitination leads to a dissociation of the beta-arrestin-GPCR complex. Stimulation of a class A GPCR, such as ADRB2, induces transient ubiquitination and subsequently promotes association with USP33.

It is found in the cytoplasm. It localises to the nucleus. The protein resides in the cell membrane. The protein localises to the membrane. Its subcellular location is the clathrin-coated pit. It is found in the cell projection. It localises to the pseudopodium. The protein resides in the cytoplasmic vesicle. In terms of biological role, functions in regulating agonist-mediated G-protein coupled receptor (GPCR) signaling by mediating both receptor desensitization and resensitization processes. During homologous desensitization, beta-arrestins bind to the GPRK-phosphorylated receptor and sterically preclude its coupling to the cognate G-protein; the binding appears to require additional receptor determinants exposed only in the active receptor conformation. The beta-arrestins target many receptors for internalization by acting as endocytic adapters (CLASPs, clathrin-associated sorting proteins) and recruiting the GPRCs to the adapter protein 2 complex 2 (AP-2) in clathrin-coated pits (CCPs). However, the extent of beta-arrestin involvement appears to vary significantly depending on the receptor, agonist and cell type. Internalized arrestin-receptor complexes traffic to intracellular endosomes, where they remain uncoupled from G-proteins. Two different modes of arrestin-mediated internalization occur. Class A receptors, like ADRB2, OPRM1, ENDRA, D1AR and ADRA1B dissociate from beta-arrestin at or near the plasma membrane and undergo rapid recycling. Class B receptors, like AVPR2, AGTR1, NTSR1, TRHR and TACR1 internalize as a complex with arrestin and traffic with it to endosomal vesicles, presumably as desensitized receptors, for extended periods of time. Receptor resensitization then requires that receptor-bound arrestin is removed so that the receptor can be dephosphorylated and returned to the plasma membrane. Involved in internalization of P2RY4 and UTP-stimulated internalization of P2RY2. Involved in phosphorylation-dependent internalization of OPRD1 ands subsequent recycling. Involved in the degradation of cAMP by recruiting cAMP phosphodiesterases to ligand-activated receptors. Beta-arrestins function as multivalent adapter proteins that can switch the GPCR from a G-protein signaling mode that transmits short-lived signals from the plasma membrane via small molecule second messengers and ion channels to a beta-arrestin signaling mode that transmits a distinct set of signals that are initiated as the receptor internalizes and transits the intracellular compartment. Acts as a signaling scaffold for MAPK pathways such as MAPK1/3 (ERK1/2). ERK1/2 activated by the beta-arrestin scaffold is largely excluded from the nucleus and confined to cytoplasmic locations such as endocytic vesicles, also called beta-arrestin signalosomes. Recruits c-Src/SRC to ADRB2 resulting in ERK activation. GPCRs for which the beta-arrestin-mediated signaling relies on both ARRB1 and ARRB2 (codependent regulation) include ADRB2, F2RL1 and PTH1R. For some GPCRs the beta-arrestin-mediated signaling relies on either ARRB1 or ARRB2 and is inhibited by the other respective beta-arrestin form (reciprocal regulation). Inhibits ERK1/2 signaling in AGTR1- and AVPR2-mediated activation (reciprocal regulation). Is required for SP-stimulated endocytosis of NK1R and recruits c-Src/SRC to internalized NK1R resulting in ERK1/2 activation, which is required for the antiapoptotic effects of SP. Is involved in proteinase-activated F2RL1-mediated ERK activity. Acts as a signaling scaffold for the AKT1 pathway. Is involved in alpha-thrombin-stimulated AKT1 signaling. Is involved in IGF1-stimulated AKT1 signaling leading to increased protection from apoptosis. Involved in activation of the p38 MAPK signaling pathway and in actin bundle formation. Involved in F2RL1-mediated cytoskeletal rearrangement and chemotaxis. Involved in AGTR1-mediated stress fiber formation by acting together with GNAQ to activate RHOA. Appears to function as signaling scaffold involved in regulation of MIP-1-beta-stimulated CCR5-dependent chemotaxis. Involved in attenuation of NF-kappa-B-dependent transcription in response to GPCR or cytokine stimulation by interacting with and stabilizing CHUK. May serve as nuclear messenger for GPCRs. Involved in OPRD1-stimulated transcriptional regulation by translocating to CDKN1B and FOS promoter regions and recruiting EP300 resulting in acetylation of histone H4. Involved in regulation of LEF1 transcriptional activity via interaction with DVL1 and/or DVL2 Also involved in regulation of receptors other than GPCRs. Involved in Toll-like receptor and IL-1 receptor signaling through the interaction with TRAF6 which prevents TRAF6 autoubiquitination and oligomerization required for activation of NF-kappa-B and JUN. Involved in IL8-mediated granule release in neutrophils. Binds phosphoinositides. Binds inositolhexakisphosphate (InsP6). Required for atypical chemokine receptor ACKR2-induced RAC1-LIMK1-PAK1-dependent phosphorylation of cofilin (CFL1) and for the up-regulation of ACKR2 from endosomal compartment to cell membrane, increasing its efficiency in chemokine uptake and degradation. Involved in the internalization of the atypical chemokine receptor ACKR3. Negatively regulates the NOTCH signaling pathway by mediating the ubiquitination and degradation of NOTCH1 by ITCH. Participates in the recruitment of the ubiquitin-protein ligase to the receptor. This Mus musculus (Mouse) protein is Beta-arrestin-1 (Arrb1).